The sequence spans 127 residues: Dual endothelin-1/VEGF signal peptide receptor (127 aa).

Topologically, residues 1–65 (MNALYVTTVP…EMKSRWNWGS (65 aa)) are extracellular. Residues 66-84 (ITCIICFTCVGSQLSMSSS) traverse the membrane as a helical segment. The Cytoplasmic segment spans residues 85-127 (KASNFSGPLQLYQRGIGHITNSYKRPQAPAWPCLSSGTMGRSH).

In terms of tissue distribution, widely expressed with higher levels in kidney and aorta.

The protein resides in the cell membrane. Dual receptor for both endothelin-1 and the signal sequence of vascular endothelial growth factor A. Does not act as a receptor for angiotensin-2. Does not bind the VEGFA mature protein. May play a role in angiogenesis with a significant role in cardiovascular and neural development. This is Dual endothelin-1/VEGF signal peptide receptor from Mus musculus (Mouse).